A 93-amino-acid chain; its full sequence is MPRSLKKGPFVDDHLLKKVEAQNARGTKNVIKTWSRRSMIVPEMIGHTIAVHDGRKHVPVFITEAMIGHKLGEFAPTRTFRGHVKEDRRSRRG.

Belongs to the universal ribosomal protein uS19 family.

Functionally, protein S19 forms a complex with S13 that binds strongly to the 16S ribosomal RNA. The polypeptide is Small ribosomal subunit protein uS19 (Acidothermus cellulolyticus (strain ATCC 43068 / DSM 8971 / 11B)).